Here is a 137-residue protein sequence, read N- to C-terminus: Flagellar basal body rod protein FlgB (137 aa).

This sequence belongs to the flagella basal body rod proteins family. In terms of assembly, the basal body constitutes a major portion of the flagellar organelle and consists of a number of rings mounted on a central rod. In Gram-negative bacteria, at least four rings, L, P, S and M are present, whereas Gram-positive bacteria lack the L and P rings. The rod consists of about 26 subunits of FlgG in the distal portion, and FlgB, FlgC and FlgF build up the proximal portion of the rod with about 6 subunits each. Rod assembly occurs by export via the flagellum-specific pathway of its constituent proteins and by their incorporation into the rod structure in the probable order of FlgB, FlgC, FlgF and FlgG. Another protein, FliE, also assembles onto the stable rod structure.

The protein localises to the bacterial flagellum basal body. Functionally, structural component of flagellum, the bacterial motility apparatus. Part of the rod structure of flagellar basal body. The sequence is that of Flagellar basal body rod protein FlgB from Proteus mirabilis (strain HI4320).